A 267-amino-acid chain; its full sequence is Acetyl-coenzyme A carboxylase carboxyl transferase subunit beta 1 (267 aa).

A CoA carboxyltransferase N-terminal domain is found at 9-267 (TWQACPKCGR…NYGIGRSAHG (259 aa)). Residues C13, C16, C31, and C34 each coordinate Zn(2+). The segment at 13–34 (CPKCGRHVHQRQWGTYQQCPYC) adopts a C4-type zinc-finger fold.

The protein belongs to the AccD/PCCB family. As to quaternary structure, acetyl-CoA carboxylase is a heterohexamer composed of biotin carboxyl carrier protein (AccB), biotin carboxylase (AccC) and two subunits each of ACCase subunit alpha (AccA) and ACCase subunit beta (AccD). It depends on Zn(2+) as a cofactor.

Its subcellular location is the cytoplasm. The enzyme catalyses N(6)-carboxybiotinyl-L-lysyl-[protein] + acetyl-CoA = N(6)-biotinyl-L-lysyl-[protein] + malonyl-CoA. Its pathway is lipid metabolism; malonyl-CoA biosynthesis; malonyl-CoA from acetyl-CoA: step 1/1. Functionally, component of the acetyl coenzyme A carboxylase (ACC) complex. Biotin carboxylase (BC) catalyzes the carboxylation of biotin on its carrier protein (BCCP) and then the CO(2) group is transferred by the transcarboxylase to acetyl-CoA to form malonyl-CoA. The sequence is that of Acetyl-coenzyme A carboxylase carboxyl transferase subunit beta 1 from Lactiplantibacillus plantarum (strain ATCC BAA-793 / NCIMB 8826 / WCFS1) (Lactobacillus plantarum).